Here is a 198-residue protein sequence, read N- to C-terminus: Probable nicotinate-nucleotide adenylyltransferase (198 aa).

Belongs to the NadD family.

It carries out the reaction nicotinate beta-D-ribonucleotide + ATP + H(+) = deamido-NAD(+) + diphosphate. Its pathway is cofactor biosynthesis; NAD(+) biosynthesis; deamido-NAD(+) from nicotinate D-ribonucleotide: step 1/1. Functionally, catalyzes the reversible adenylation of nicotinate mononucleotide (NaMN) to nicotinic acid adenine dinucleotide (NaAD). This Herpetosiphon aurantiacus (strain ATCC 23779 / DSM 785 / 114-95) protein is Probable nicotinate-nucleotide adenylyltransferase.